The chain runs to 85 residues: MSSGGLLLLLGLLTLWAELTPISSRERHPDCDKPPDTGRCGNNVRAFYYKPSTNKCVQFIYGGCNANGNHFKSDHLCRCQCREND.

Positions 1–24 (MSSGGLLLLLGLLTLWAELTPISS) are cleaved as a signal peptide. The BPTI/Kunitz inhibitor domain maps to 31–81 (CDKPPDTGRCGNNVRAFYYKPSTNKCVQFIYGGCNANGNHFKSDHLCRCQC). 3 cysteine pairs are disulfide-bonded: cysteine 31/cysteine 81, cysteine 40/cysteine 64, and cysteine 56/cysteine 77.

The protein belongs to the venom Kunitz-type family. In terms of assembly, heterodimer; disulfide-linked. The A chains have phospholipase A2 activity and the B chains show homology with the basic protease inhibitors. Expressed by the venom gland.

The protein localises to the secreted. In terms of biological role, beta-1-bungarotoxin is a presynaptic neurotoxin of the venom. The B chain is homologous to venom basic protease inhibitors but has no protease inhibitor activity and blocks voltage-gated potassium channels (Kv). This Bungarus fasciatus (Banded krait) protein is Kunitz-type serine protease inhibitor homolog beta-bungarotoxin BF B2 chain.